We begin with the raw amino-acid sequence, 147 residues long: Large ribosomal subunit protein bL9 (147 aa).

The protein belongs to the bacterial ribosomal protein bL9 family.

Its function is as follows. Binds to the 23S rRNA. The protein is Large ribosomal subunit protein bL9 of Campylobacter jejuni subsp. jejuni serotype O:23/36 (strain 81-176).